A 186-amino-acid chain; its full sequence is UPF0340 protein M6_Spy1622 (186 aa).

The protein belongs to the UPF0340 family.

The protein is UPF0340 protein M6_Spy1622 of Streptococcus pyogenes serotype M6 (strain ATCC BAA-946 / MGAS10394).